The following is a 412-amino-acid chain: FAD-dependent monooxygenase nscC (412 aa).

Residues 1–21 form the signal peptide; sequence MGKQQETILIIGAGIAGLTTS. FAD-binding residues include glutamate 35 and alanine 46. Asparagine 92 carries N-linked (GlcNAc...) asparagine glycosylation. Arginine 119 is a binding site for FAD. Residues asparagine 170 and asparagine 231 are each glycosylated (N-linked (GlcNAc...) asparagine). FAD is bound by residues aspartate 326 and glycine 339.

Belongs to the paxM FAD-dependent monooxygenase family. It depends on FAD as a cofactor.

It functions in the pathway secondary metabolite biosynthesis. In terms of biological role, FAD-dependent monooxygenase; part of the gene cluster that mediates the biosynthesis of neosartoricin B, a prenylated anthracenone that probably exhibits T-cell antiproliferative activity, suggestive of a physiological role as an immunosuppressive agent. The non-reducing polyketide synthase nscA probably synthesizes and cyclizes the decaketide backbone. The hydrolase nscB then mediates the product release through hydrolysis followed by spontaneous decarboxylation. The prenyltransferase nscD catalyzes the addition of the dimethylallyl group to the aromatic C5. The FAD-dependent monooxygenase nscC is then responsible for the stereospecific hydroxylation at C2. Neosartoricin B can be converted into two additional compounds neosartoricins C and D. Neosartoricin C is a spirocyclic compound that is cyclized through the attack of C3 hydroxyl on C14, followed by dehydration. On the other hand, neosartoricin D is a further cyclized compound in which attack of C2 on C14 in neosartoricin C results in the formation of the acetal-containing dioxabicyclo-octanone ring. Both of these compounds are novel and possibly represent related metabolites of the gene cluster. The chain is FAD-dependent monooxygenase nscC from Arthroderma benhamiae (strain ATCC MYA-4681 / CBS 112371) (Trichophyton mentagrophytes).